A 355-amino-acid chain; its full sequence is Replication-associated protein (355 aa).

Residues 11–114 (LHRTANTFLT…PLALFERGTF (104 aa)) form the CRESS-DNA virus Rep endonuclease domain. The RCR-1 signature appears at 18-21 (FLTY). 3 residues coordinate a divalent metal cation: glutamate 52, histidine 60, and histidine 62. The RCR-2 signature appears at 60 to 62 (HLH). The active-site For DNA cleavage activity is the tyrosine 100. Residues 100-103 (YILK) carry the RCR-3 motif. An a divalent metal cation-binding site is contributed by glutamate 104. An oligomerization region spans residues 175–187 (SANKLFPDIQEEF). 229 to 236 (GPTRTGKS) serves as a coordination point for ATP. Residues 252-270 (VDWSSYNEDAIYNIVDDIP) form a transactivation region. The Nuclear localization signal motif lies at 292–303 (KYGKKKKVQMKS).

This sequence belongs to the geminiviridae Rep protein family. Homooligomer. Rep binds to repeated DNA motifs (iterons). Forms the O-complex, which is a Rep-DNA complex involved in the initiation of RCR. Part of the C- and V-complexes which are RepA-Rep-DNA complexes involved in the c-sense and v-sense transcription. Mg(2+) serves as cofactor. Requires Mn(2+) as cofactor.

It is found in the host nucleus. In terms of biological role, essential for the replication of viral ssDNA. The closed circular ssDNA genome is first converted to a superhelical dsDNA. Rep binds a specific region at the genome origin of replication. It introduces an endonucleolytic nick within the conserved sequence 5'-TAATATTAC-3' in the intergenic region of the genome present in all geminiviruses, thereby initiating the rolling circle replication (RCR). Following cleavage, binds covalently to the 5'-phosphate of DNA as a tyrosyl ester. The cleavage gives rise to a free 3'-OH that serves as a primer for the cellular DNA polymerase. The polymerase synthesizes the (+) strand DNA by rolling circle mechanism. After one round of replication, a Rep-catalyzed nucleotidyl transfer reaction releases a circular single-stranded virus genome, thereby terminating the replication. Displays origin-specific DNA cleavage, nucleotidyl transferase, ATPase and helicase activities. Acts as an inhibitor of C-sense gene transcription. This is Replication-associated protein from Maize streak virus genotype D (isolate Raw) (MSV).